The chain runs to 184 residues: Acireductone dioxygenase (184 aa).

4 residues coordinate Fe(2+): histidine 87, histidine 89, glutamate 93, and histidine 137. The Ni(2+) site is built by histidine 87, histidine 89, glutamate 93, and histidine 137.

The protein belongs to the acireductone dioxygenase (ARD) family. The cofactor is Fe(2+). Ni(2+) serves as cofactor.

It is found in the cytoplasm. The protein resides in the nucleus. It catalyses the reaction 1,2-dihydroxy-5-(methylsulfanyl)pent-1-en-3-one + O2 = 4-methylsulfanyl-2-oxobutanoate + formate + 2 H(+). It carries out the reaction 1,2-dihydroxy-5-(methylsulfanyl)pent-1-en-3-one + O2 = 3-(methylsulfanyl)propanoate + CO + formate + 2 H(+). It functions in the pathway amino-acid biosynthesis; L-methionine biosynthesis via salvage pathway; L-methionine from S-methyl-5-thio-alpha-D-ribose 1-phosphate: step 5/6. Catalyzes 2 different reactions between oxygen and the acireductone 1,2-dihydroxy-3-keto-5-methylthiopentene (DHK-MTPene) depending upon the metal bound in the active site. Fe-containing acireductone dioxygenase (Fe-ARD) produces formate and 2-keto-4-methylthiobutyrate (KMTB), the alpha-ketoacid precursor of methionine in the methionine recycle pathway. Ni-containing acireductone dioxygenase (Ni-ARD) produces methylthiopropionate, carbon monoxide and formate, and does not lie on the methionine recycle pathway. The sequence is that of Acireductone dioxygenase from Ciona intestinalis (Transparent sea squirt).